A 113-amino-acid polypeptide reads, in one-letter code: UPF0060 membrane protein Mmcs_2513 (113 aa).

4 helical membrane-spanning segments follow: residues Ala-12–Val-32, Gly-37–Phe-57, Ile-66–Asp-86, and Arg-92–Pro-112.

The protein belongs to the UPF0060 family.

Its subcellular location is the cell membrane. This chain is UPF0060 membrane protein Mmcs_2513, found in Mycobacterium sp. (strain MCS).